Here is a 742-residue protein sequence, read N- to C-terminus: MSLLLEPSKEQIKEEKLYQQMGVSDDEFALIESIIGRLPNYTEIGIFSVMWSEHCSYKNSKPVLRKFPTSGERVLQGPGEGAGIVDIGDNQAVVFKIESHNHPSAIEPYQGAATGVGGIIRDVFSMGARPIAVLNSLRFGELTSPRVKYLFEEVVAGIAGYGNCIGIPTVGGEVQFDASYEGNPLVNAMCVGLIDHKDIKKGQAKGVGNTVMYVGAKTGRDGIHGATFASEEMSDSSEEKRSAVQVGDPFMEKLLLEACLEVIQCDALVGIQDMGAAGLTSSSAEMASKAGSGIEMNLDLIPQRETGMTAYEMMLSESQERMLLVIERGREQEIVDIFDKYDLEAVSVGHVTDDKMLRLRHNGEVVCELPVDALAEEAPVYHKPSAEPAYYREFQETEAPAPEVKDATETLFALLQQPTIASKEWVYDQYDYMVRTNTVVAPGSDAGVLRIRGTKKALAMTTDCNARYLYLDPEEGGKIAVAEAARNIVCSGAEPLAVTDNLNFGNPEKPEIFWQIEKAADGISEACNVLSTPVIGGNVSLYNESNGTAIYPTPVIGMVGLIEDTAHITTQHFKQAGDLVYVIGETKPEFAGSELQKMTEGRIYGKAPQIDLDIELSRQKALLDAIKKGFVQSAHDVSEGGLGVAIAESVMTTENLGANVTVEGEAALLFSESQSRFVVSVKKEHQAAFEAAVADAVHIGEVTADGLLAIQNQDGQQLVHAQTKELERAWKGAIPCLLKSKA.

Histidine 54 is an active-site residue. ATP contacts are provided by tyrosine 57 and lysine 96. Glutamate 98 is a binding site for Mg(2+). Substrate contacts are provided by residues 99 to 102 (SHNH) and arginine 121. Histidine 100 functions as the Proton acceptor in the catalytic mechanism. Aspartate 122 contributes to the Mg(2+) binding site. Residue glutamine 245 coordinates substrate. Aspartate 273 provides a ligand contact to Mg(2+). 317-319 (ESQ) serves as a coordination point for substrate. The ATP site is built by aspartate 500 and glycine 537. Asparagine 538 lines the Mg(2+) pocket. Position 540 (serine 540) interacts with substrate.

It belongs to the FGAMS family. In terms of assembly, monomer. Part of the FGAM synthase complex composed of 1 PurL, 1 PurQ and 2 PurS subunits.

The protein resides in the cytoplasm. It catalyses the reaction N(2)-formyl-N(1)-(5-phospho-beta-D-ribosyl)glycinamide + L-glutamine + ATP + H2O = 2-formamido-N(1)-(5-O-phospho-beta-D-ribosyl)acetamidine + L-glutamate + ADP + phosphate + H(+). The protein operates within purine metabolism; IMP biosynthesis via de novo pathway; 5-amino-1-(5-phospho-D-ribosyl)imidazole from N(2)-formyl-N(1)-(5-phospho-D-ribosyl)glycinamide: step 1/2. Functionally, part of the phosphoribosylformylglycinamidine synthase complex involved in the purines biosynthetic pathway. Catalyzes the ATP-dependent conversion of formylglycinamide ribonucleotide (FGAR) and glutamine to yield formylglycinamidine ribonucleotide (FGAM) and glutamate. The FGAM synthase complex is composed of three subunits. PurQ produces an ammonia molecule by converting glutamine to glutamate. PurL transfers the ammonia molecule to FGAR to form FGAM in an ATP-dependent manner. PurS interacts with PurQ and PurL and is thought to assist in the transfer of the ammonia molecule from PurQ to PurL. In Bacillus velezensis (strain DSM 23117 / BGSC 10A6 / LMG 26770 / FZB42) (Bacillus amyloliquefaciens subsp. plantarum), this protein is Phosphoribosylformylglycinamidine synthase subunit PurL.